We begin with the raw amino-acid sequence, 605 residues long: NADH-ubiquinone oxidoreductase chain 5 (605 aa).

Transmembrane regions (helical) follow at residues 11-31 (ILITELLILALSALMTMLPPI), 49-69 (LSLTSILIHILIEEPSSISSL), 77-97 (LAMSIKIDYYSLIFISIALFI), 120-140 (MFLLLFLMSMIMFIAANNFFP), 141-161 (MLVGWGTMGLMSYLLISWWHG), 178-198 (LADIGFILTFSWCITYMSSLD), 202-222 (FFATSTLVTGVPILGMLMAAM), 244-264 (VSALLHSSTMVTAGVYLLIGM), 273-295 (GFSEACLTMGAATALYASFKALL), 302-322 (IIAFSTLSQLGFMMATVGLNH), 325-345 (LAFMHLCMHAFFKAMMFLCAG), 371-391 (ASCFTLSTLALAGFPFLTGFF), 408-425 (LWATMLLISTMFTAIYSL), 457-477 (LALASIVTGSLFSLFTPPIYT), 488-508 (LAALTLTFMSAFLAMYLISLA), and 584-604 (IKTYFMAFLVTFVIILYIMLF).

The protein belongs to the complex I subunit 5 family.

Its subcellular location is the mitochondrion inner membrane. It carries out the reaction a ubiquinone + NADH + 5 H(+)(in) = a ubiquinol + NAD(+) + 4 H(+)(out). Core subunit of the mitochondrial membrane respiratory chain NADH dehydrogenase (Complex I) that is believed to belong to the minimal assembly required for catalysis. Complex I functions in the transfer of electrons from NADH to the respiratory chain. The immediate electron acceptor for the enzyme is believed to be ubiquinone. The sequence is that of NADH-ubiquinone oxidoreductase chain 5 (MT-ND5) from Pelomedusa subrufa (African side-necked turtle).